The following is a 496-amino-acid chain: L-arabinose isomerase (496 aa).

4 residues coordinate Mn(2+): glutamate 306, glutamate 331, histidine 348, and histidine 447.

It belongs to the arabinose isomerase family. Mn(2+) serves as cofactor.

It carries out the reaction beta-L-arabinopyranose = L-ribulose. Its pathway is carbohydrate degradation; L-arabinose degradation via L-ribulose; D-xylulose 5-phosphate from L-arabinose (bacterial route): step 1/3. Its function is as follows. Catalyzes the conversion of L-arabinose to L-ribulose. The chain is L-arabinose isomerase from Geobacillus kaustophilus (strain HTA426).